The primary structure comprises 353 residues: tRNA N6-adenosine threonylcarbamoyltransferase (353 aa).

2 residues coordinate Fe cation: histidine 109 and histidine 113. Substrate is bound by residues 136 to 140, aspartate 169, glycine 182, aspartate 186, and asparagine 284; that span reads TVSGG. Aspartate 312 contacts Fe cation.

It belongs to the KAE1 / TsaD family. Requires Fe(2+) as cofactor.

It is found in the cytoplasm. The enzyme catalyses L-threonylcarbamoyladenylate + adenosine(37) in tRNA = N(6)-L-threonylcarbamoyladenosine(37) in tRNA + AMP + H(+). Required for the formation of a threonylcarbamoyl group on adenosine at position 37 (t(6)A37) in tRNAs that read codons beginning with adenine. Is involved in the transfer of the threonylcarbamoyl moiety of threonylcarbamoyl-AMP (TC-AMP) to the N6 group of A37, together with TsaE and TsaB. TsaD likely plays a direct catalytic role in this reaction. The polypeptide is tRNA N6-adenosine threonylcarbamoyltransferase (Chlorobaculum tepidum (strain ATCC 49652 / DSM 12025 / NBRC 103806 / TLS) (Chlorobium tepidum)).